The chain runs to 628 residues: Biosynthetic arginine decarboxylase (628 aa).

Position 99 is an N6-(pyridoxal phosphate)lysine (Lys-99). 279 to 289 (VDVGGGLGIDY) is a substrate binding site.

This sequence belongs to the Orn/Lys/Arg decarboxylase class-II family. SpeA subfamily. Mg(2+) serves as cofactor. Pyridoxal 5'-phosphate is required as a cofactor.

It catalyses the reaction L-arginine + H(+) = agmatine + CO2. Its function is as follows. Catalyzes the biosynthesis of agmatine from arginine. This Xanthomonas campestris pv. campestris (strain ATCC 33913 / DSM 3586 / NCPPB 528 / LMG 568 / P 25) protein is Biosynthetic arginine decarboxylase.